A 405-amino-acid chain; its full sequence is Replication factor C large subunit (405 aa).

47–54 (GPPGVGKT) contributes to the ATP binding site.

Belongs to the activator 1 small subunits family. RfcL subfamily. As to quaternary structure, heteromultimer composed of small subunits (RfcS) and large subunits (RfcL).

Its function is as follows. Part of the RFC clamp loader complex which loads the PCNA sliding clamp onto DNA. The polypeptide is Replication factor C large subunit (Saccharolobus islandicus (strain M.16.4 / Kamchatka #3) (Sulfolobus islandicus)).